We begin with the raw amino-acid sequence, 982 residues long: MEAKAEGFCSFLVGLSGAPVNSKELKSALEKGDMKARASALEALIRMHLNGEPQNHMIMTVIKFITPLDDHYIKKLVLYFWEVVDKTDASGKLLSEMILICSFLREDLLHPNEYIRGLALRFMCKVKERELVEPLVSSVVQNLTHRVTYVRRNAVLAVHRIFKRFPELLPDAAELVEKFISEENDVSASRNAFEMLVECSPDRVVKFLAELRESKNLESLGATLQMSIVDFAGHMIRANPYDKGRYVTVLFSILQSNNPAVRYQCASTLLSISTSPTAIRQAALTFIDLLKTHTDISVRLIVVDQLDAMRERFSKILQDSLLDILSVLANGTMEIRKRIVTLGVELVSNQNSEVFVQAIKKELYWVKNECDVDDKESLLEYKKLLIRATRTAVARRPHMASAVIPLVLEYLYEEDDSGFEVVSLIREVLQLQPSLRSETLRQLRQTLRMIRCPSVIRTVLWLLGTHVTSADDALEVIRLLINTLEPLPLEPTVKEQMKQQEDFDGHKGGQQKPRMQMTTIVQEDGTYVMSSVPSNKTQEDAEGNDSNCGLRGVLTGGKFFIAAPLASTLSKLIIRLFNHHSSGVDESTMKEAQNSAIMLLNEVLRFCTMDGAAGMIDDATHEQIRLALLNITNPRSPLLATFVEDSSKALDSLTNKVGSIAGGDGFDFNKRNNDNVVGRTSFDEQQVALCSVDTPVMFTQIMEGKGSLLELEAVDDLGSVVANASIEKTEEFLIKLEKTVPLSGFCDPLYCEASVTVHQFDITVDWYIANCTANVLRDVSIELTPLGSMKLCERPQVHTIQPHGSVRIRTALKVGSPETGVICASVLYEGPQNERGCVVLNNVRVDIMNYVRPAKCSASEFRDKWCKYDWENAVAIRTEKTDMREYVEYVMQGTNTRLLEPYPEEDDEVVSAFDGKGDNGHRYVSCNMYARTLFGDDALLNVSIERDAEGKLSGMVRVRANKRPVAYGFGEKLNILNRRIVS.

HEAT repeat units lie at residues S16 to P53, E130 to E167, Y241 to A278, and L317 to S352.

In terms of assembly, oligomeric complex that consists of at least the alpha, beta, beta', gamma, delta, epsilon and zeta subunits.

Its subcellular location is the cytoplasm. The protein localises to the golgi apparatus membrane. It is found in the cytoplasmic vesicle. The protein resides in the COPI-coated vesicle membrane. In terms of biological role, the coatomer is a cytosolic protein complex that binds to dilysine motifs and reversibly associates with Golgi non-clathrin-coated vesicles, which further mediate biosynthetic protein transport from the ER, via the Golgi up to the trans Golgi network. Coatomer complex is required for budding from Golgi membranes, and is essential for the retrograde Golgi-to-ER transport of dilysine-tagged proteins. The sequence is that of Coatomer subunit beta from Trypanosoma brucei brucei.